Here is a 517-residue protein sequence, read N- to C-terminus: Tyrosine 3-monooxygenase (517 aa).

Residue serine 33 is modified to Phosphoserine; by PKA. Histidine 345, histidine 350, and glutamate 390 together coordinate Fe cation.

Belongs to the biopterin-dependent aromatic amino acid hydroxylase family. Requires Fe(2+) as cofactor.

It localises to the cytoplasm. The protein localises to the perinuclear region. It is found in the cell projection. Its subcellular location is the axon. The enzyme catalyses (6R)-L-erythro-5,6,7,8-tetrahydrobiopterin + L-tyrosine + O2 = (4aS,6R)-4a-hydroxy-L-erythro-5,6,7,8-tetrahydrobiopterin + L-dopa. Its pathway is catecholamine biosynthesis; dopamine biosynthesis; dopamine from L-tyrosine: step 1/2. Its activity is regulated as follows. Phosphorylation leads to an increase in the catalytic activity. Functionally, involved in the synthesis of catecholamines, such as dopamine. Has a role in serotonin signaling. Required for normal explorative and foraging behavior. In Caenorhabditis briggsae, this protein is Tyrosine 3-monooxygenase (cat-2).